Here is a 272-residue protein sequence, read N- to C-terminus: MFNFDNTLGYEPPLDVHNLTDEQTAISIENLNLFYGQAQALHDISMRIPKGRVTAFIGPSGCGKSTLLRCINRMNDLVEGCKVTGKVRLHGKNVYHPNVDVATLRRRVGMVFQRPNPFPKSIYENVVYGLRLQGVKNSRTLDDAVERSLRSAALWDEVKDRLHENAFGLSGGQQQRLVIARAVAIEPEVLLLDEPTSALDPISTLTIEELINELKTQYTVVIVTHNMQQAARVSDHTAFIHMGKLIEYSDADSIFTSPMKKQTEDYITGRYG.

One can recognise an ABC transporter domain in the interval 26 to 267 (ISIENLNLFY…PMKKQTEDYI (242 aa)). 58 to 65 (GPSGCGKS) serves as a coordination point for ATP.

This sequence belongs to the ABC transporter superfamily. Phosphate importer (TC 3.A.1.7) family. In terms of assembly, the complex is composed of two ATP-binding proteins (PstB), two transmembrane proteins (PstC and PstA) and a solute-binding protein (PstS).

It localises to the cell inner membrane. It carries out the reaction phosphate(out) + ATP + H2O = ADP + 2 phosphate(in) + H(+). Its function is as follows. Part of the ABC transporter complex PstSACB involved in phosphate import. Responsible for energy coupling to the transport system. This chain is Phosphate import ATP-binding protein PstB 1, found in Vibrio parahaemolyticus serotype O3:K6 (strain RIMD 2210633).